Consider the following 185-residue polypeptide: Ribosome-recycling factor (185 aa).

It belongs to the RRF family.

Its subcellular location is the cytoplasm. Functionally, responsible for the release of ribosomes from messenger RNA at the termination of protein biosynthesis. May increase the efficiency of translation by recycling ribosomes from one round of translation to another. The polypeptide is Ribosome-recycling factor (Desulfatibacillum aliphaticivorans).